Here is a 245-residue protein sequence, read N- to C-terminus: Carbohydrate deacetylase (245 aa).

Residues His-59 and His-121 each contribute to the Mg(2+) site.

Belongs to the YdjC deacetylase family. Homodimer. Mg(2+) serves as cofactor.

In terms of biological role, probably catalyzes the deacetylation of acetylated carbohydrates an important step in the degradation of oligosaccharides. The sequence is that of Carbohydrate deacetylase from Clostridium beijerinckii (strain ATCC 51743 / NCIMB 8052) (Clostridium acetobutylicum).